Reading from the N-terminus, the 216-residue chain is Imidazole glycerol phosphate synthase subunit HisH (216 aa).

The 215-residue stretch at 2–216 (RVAIIDYGSG…LISNFLRWKP (215 aa)) folds into the Glutamine amidotransferase type-1 domain. C88 serves as the catalytic Nucleophile. Residues H196 and E198 contribute to the active site.

As to quaternary structure, heterodimer of HisH and HisF.

It is found in the cytoplasm. It carries out the reaction 5-[(5-phospho-1-deoxy-D-ribulos-1-ylimino)methylamino]-1-(5-phospho-beta-D-ribosyl)imidazole-4-carboxamide + L-glutamine = D-erythro-1-(imidazol-4-yl)glycerol 3-phosphate + 5-amino-1-(5-phospho-beta-D-ribosyl)imidazole-4-carboxamide + L-glutamate + H(+). The enzyme catalyses L-glutamine + H2O = L-glutamate + NH4(+). Its pathway is amino-acid biosynthesis; L-histidine biosynthesis; L-histidine from 5-phospho-alpha-D-ribose 1-diphosphate: step 5/9. In terms of biological role, IGPS catalyzes the conversion of PRFAR and glutamine to IGP, AICAR and glutamate. The HisH subunit catalyzes the hydrolysis of glutamine to glutamate and ammonia as part of the synthesis of IGP and AICAR. The resulting ammonia molecule is channeled to the active site of HisF. The polypeptide is Imidazole glycerol phosphate synthase subunit HisH (Rhizobium meliloti (strain 1021) (Ensifer meliloti)).